A 176-amino-acid polypeptide reads, in one-letter code: Co-chaperone protein HscB homolog (176 aa).

Residues 7–79 enclose the J domain; sequence THFSLFGLPE…LKRATYLLHL (73 aa).

It belongs to the HscB family. As to quaternary structure, interacts with HscA and stimulates its ATPase activity.

Co-chaperone involved in the maturation of iron-sulfur cluster-containing proteins. Seems to help targeting proteins to be folded toward HscA. This chain is Co-chaperone protein HscB homolog, found in Ralstonia nicotianae (strain ATCC BAA-1114 / GMI1000) (Ralstonia solanacearum).